The sequence spans 234 residues: 2-amino-5-formylamino-6-ribosylaminopyrimidin-4(3H)-one 5'-monophosphate deformylase (234 aa).

Glu29, His31, Asp40, and His109 together coordinate Fe cation.

It belongs to the creatininase superfamily. FAPy deformylase family. Homodimer. It depends on Fe(2+) as a cofactor. Requires Zn(2+) as cofactor.

It carries out the reaction 2-amino-5-formylamino-6-(5-phospho-D-ribosylamino)pyrimidin-4(3H)-one + H2O = 2,5-diamino-6-(1-D-ribosylamino)pyrimidin-4(3H)-one 5'-phosphate + formate + H(+). It functions in the pathway cofactor biosynthesis; coenzyme F420 biosynthesis. The protein operates within cofactor biosynthesis; riboflavin biosynthesis. Functionally, catalyzes the hydrolysis of the formamide of 2-amino-5-formylamino-6-ribosylamino-4(3H)-pyrimidinone 5'-monophosphate (FAPy) to form 2,5-diamino-6-ribosylamino-4(3H)-pyrimidinone 5'-phosphate (APy). The protein is 2-amino-5-formylamino-6-ribosylaminopyrimidin-4(3H)-one 5'-monophosphate deformylase of Methanobrevibacter ruminantium (strain ATCC 35063 / DSM 1093 / JCM 13430 / OCM 146 / M1) (Methanobacterium ruminantium).